We begin with the raw amino-acid sequence, 491 residues long: Sucrose transport protein SUC7 (491 aa).

A compositionally biased stretch (basic and acidic residues) spans 1-13 (MSDLQANKDETTV). Positions 1–25 (MSDLQANKDETTVDRQSSSSVDLDG) are disordered. Topologically, residues 1-32 (MSDLQANKDETTVDRQSSSSVDLDGPSPLRKM) are cytoplasmic. Ser-17 is modified (phosphoserine). The chain crosses the membrane as a helical span at residues 33–53 (ISVASIAAGIQFGWALQLSLL). Over 54 to 67 (TPYVQLLGVPHKWP) the chain is Extracellular. The chain crosses the membrane as a helical span at residues 68–88 (SFIWLCGPVSGLLVQPSVGYF). Residues 89–100 (SDRCTSRFGRRR) are Cytoplasmic-facing. The helical transmembrane segment at 101–121 (PFIATGALLVAVSVVLIGYAA) threads the bilayer. Residues 122 to 138 (DFGHSMGDKIDKPVKMR) are Extracellular-facing. Residues 139–159 (AVVIFALGFWILDVANNTLQG) traverse the membrane as a helical segment. Topologically, residues 160–180 (PCRAFLGDLAAGDAQKTRTAN) are cytoplasmic. Residues 181 to 201 (AFFSFFMAVGNVLGYAAGSYT) traverse the membrane as a helical segment. Residues 202 to 223 (NLYKIFPFTMTKACDIYCANLK) lie on the Extracellular side of the membrane. The chain crosses the membrane as a helical span at residues 224-244 (SCFFLSITLLLVVTIIALWYV). Residues 245–276 (EDKQWSPKADSDNEKTPFFGEIFGAFKVMKRP) lie on the Cytoplasmic side of the membrane. A helical transmembrane segment spans residues 277-297 (MWMLLIVTALNWIAWFPFLLY). At 298 to 323 (DTDWMGREVYGGDSKGDDKMKKLYNQ) the chain is on the extracellular side. Residues 324 to 344 (GIHVGALGLMLNSIVLGVMSL) form a helical membrane-spanning segment. Topologically, residues 345-358 (GIEGISRKMGGAKR) are cytoplasmic. A helical transmembrane segment spans residues 359–379 (LWGAVNIILAVCLAMTVLVTK). Residues 380 to 402 (KAEEHRRIAGPMALPTDGIRAGA) lie on the Extracellular side of the membrane. A helical transmembrane segment spans residues 403-423 (LTLFALLGIPLAITFSIPFAL). At 424 to 443 (ASIISSSSGAGQRLSLGVLN) the chain is on the cytoplasmic side. Residues 444–464 (MAIVIPQMIVSFGVGPIDALF) traverse the membrane as a helical segment. At 465–468 (GDGN) the chain is on the extracellular side. A helical membrane pass occupies residues 469–489 (LPGFVVGAIAAAVSSIVAFTV). Residues 490 to 491 (LP) are Cytoplasmic-facing.

This sequence belongs to the glycoside-pentoside-hexuronide (GPH) cation symporter transporter (TC 2.A.2.4) family. As to expression, expressed in anthers.

The protein localises to the cell membrane. The protein operates within glycan biosynthesis; sucrose metabolism. In terms of biological role, may be responsible for the transport of glucosides into the cell, with the concomitant uptake of protons (symport system). Does not seem to transport sucrose. The protein is Sucrose transport protein SUC7 of Arabidopsis thaliana (Mouse-ear cress).